The sequence spans 335 residues: Fructose-1,6-bisphosphatase class 1 (335 aa).

Residues Glu92, Asp114, Leu116, and Asp117 each contribute to the Mg(2+) site. Substrate is bound by residues Asp117–Ser120, Asn209, and Lys275. Residue Glu281 participates in Mg(2+) binding.

Belongs to the FBPase class 1 family. Homotetramer. It depends on Mg(2+) as a cofactor.

The protein localises to the cytoplasm. It carries out the reaction beta-D-fructose 1,6-bisphosphate + H2O = beta-D-fructose 6-phosphate + phosphate. The protein operates within carbohydrate biosynthesis; gluconeogenesis. This is Fructose-1,6-bisphosphatase class 1 from Paracidovorax citrulli (strain AAC00-1) (Acidovorax citrulli).